We begin with the raw amino-acid sequence, 319 residues long: Ferrochelatase (319 aa).

Residues H192 and E271 each contribute to the Fe cation site.

This sequence belongs to the ferrochelatase family.

The protein localises to the cytoplasm. It catalyses the reaction heme b + 2 H(+) = protoporphyrin IX + Fe(2+). The protein operates within porphyrin-containing compound metabolism; protoheme biosynthesis; protoheme from protoporphyrin-IX: step 1/1. Its function is as follows. Catalyzes the ferrous insertion into protoporphyrin IX. The chain is Ferrochelatase from Geotalea daltonii (strain DSM 22248 / JCM 15807 / FRC-32) (Geobacter daltonii).